The following is a 200-amino-acid chain: Pyridoxal 5'-phosphate synthase subunit PdxT (200 aa).

An L-glutamine-binding site is contributed by 52–54 (GES). Residue C84 is the Nucleophile of the active site. Residues R116 and 145–146 (IR) each bind L-glutamine. Residues H181 and E183 each act as charge relay system in the active site.

It belongs to the glutaminase PdxT/SNO family. As to quaternary structure, in the presence of PdxS, forms a dodecamer of heterodimers. Only shows activity in the heterodimer.

It carries out the reaction aldehydo-D-ribose 5-phosphate + D-glyceraldehyde 3-phosphate + L-glutamine = pyridoxal 5'-phosphate + L-glutamate + phosphate + 3 H2O + H(+). The enzyme catalyses L-glutamine + H2O = L-glutamate + NH4(+). The protein operates within cofactor biosynthesis; pyridoxal 5'-phosphate biosynthesis. Functionally, catalyzes the hydrolysis of glutamine to glutamate and ammonia as part of the biosynthesis of pyridoxal 5'-phosphate. The resulting ammonia molecule is channeled to the active site of PdxS. This is Pyridoxal 5'-phosphate synthase subunit PdxT from Saccharolobus islandicus (strain L.S.2.15 / Lassen #1) (Sulfolobus islandicus).